Consider the following 432-residue polypeptide: Trigger factor (432 aa).

The region spanning 161-246 (DDRVTIDFVG…LKKIENMVLP (86 aa)) is the PPIase FKBP-type domain.

The protein belongs to the FKBP-type PPIase family. Tig subfamily.

The protein resides in the cytoplasm. The enzyme catalyses [protein]-peptidylproline (omega=180) = [protein]-peptidylproline (omega=0). In terms of biological role, involved in protein export. Acts as a chaperone by maintaining the newly synthesized protein in an open conformation. Functions as a peptidyl-prolyl cis-trans isomerase. The sequence is that of Trigger factor from Haemophilus influenzae (strain 86-028NP).